A 139-amino-acid polypeptide reads, in one-letter code: Trafficking protein particle complex subunit 2-like protein (139 aa).

The protein belongs to the TRAPP small subunits family. Sedlin subfamily. In terms of assembly, component of the multisubunit TRAPP (transport protein particle) complex, which includes at least TRAPPC2, TRAPPC2L, TRAPPC3, TRAPPC3L, TRAPPC4, TRAPPC5, TRAPPC8, TRAPPC9, TRAPPC10, TRAPPC11 and TRAPPC12. Interacts with the heterodimer TRAPPC3-TRAPPC6A.

Its subcellular location is the cytoplasm. The protein resides in the perinuclear region. The protein localises to the endoplasmic reticulum. It localises to the golgi apparatus. May play a role in vesicular transport from endoplasmic reticulum to Golgi. This is Trafficking protein particle complex subunit 2-like protein (Trappc2l) from Mus musculus (Mouse).